The primary structure comprises 289 residues: 4-hydroxy-tetrahydrodipicolinate synthase (289 aa).

Thr-43 serves as a coordination point for pyruvate. Catalysis depends on Tyr-131, which acts as the Proton donor/acceptor. Lys-160 serves as the catalytic Schiff-base intermediate with substrate. Val-200 is a pyruvate binding site.

This sequence belongs to the DapA family. In terms of assembly, homotetramer; dimer of dimers.

The protein resides in the cytoplasm. The catalysed reaction is L-aspartate 4-semialdehyde + pyruvate = (2S,4S)-4-hydroxy-2,3,4,5-tetrahydrodipicolinate + H2O + H(+). It participates in amino-acid biosynthesis; L-lysine biosynthesis via DAP pathway; (S)-tetrahydrodipicolinate from L-aspartate: step 3/4. In terms of biological role, catalyzes the condensation of (S)-aspartate-beta-semialdehyde [(S)-ASA] and pyruvate to 4-hydroxy-tetrahydrodipicolinate (HTPA). In Methanococcus maripaludis (strain C7 / ATCC BAA-1331), this protein is 4-hydroxy-tetrahydrodipicolinate synthase.